The primary structure comprises 1016 residues: EMILIN-1 (1016 aa).

The first 21 residues, 1 to 21 (MAPRTLWSCYLCCLLTAAAGA), serve as a signal peptide directing secretion. An EMI domain is found at 56-131 (HRNWCAYVVT…QGYGGDDCAE (76 aa)). 3 cysteine pairs are disulfide-bonded: Cys60–Cys121, Cys85–Cys92, and Cys120–Cys129. The interval 135-182 (PALGPASSTPRPLARPARPNLSGSSAGSPLSGLGGEGPGESEKVQQLE) is disordered. Over residues 139 to 165 (PASSTPRPLARPARPNLSGSSAGSPLS) the composition is skewed to low complexity. N-linked (GlcNAc...) asparagine glycosylation occurs at Asn154. Residues 216–256 (TAFNGRQQPADAAARPGVHETLNEIQHQLQLLDTRVSTHDQ) are a coiled coil. 2 disordered regions span residues 257-288 (ELGHLNNHHGGSSSSGGSRAPAPASAPPGPSE) and 383-402 (RGTELGGAAGQGGHPPGYTS). A compositionally biased stretch (low complexity) spans 266–279 (GGSSSSGGSRAPAP). Residues 356–420 (PELGRRLAEL…EDRFNSTLGP (65 aa)) adopt a coiled-coil conformation. A compositionally biased stretch (gly residues) spans 386–397 (ELGGAAGQGGHP). Asn415 is a glycosylation site (N-linked (GlcNAc...) asparagine). Residues 416–435 (STLGPSEEQEESWPGAPGGL) form a disordered region. N-linked (GlcNAc...) asparagine glycans are attached at residues Asn455 and Asn561. Residues 576–603 (AHGDEGCGACGGVQEELGRLRDGVERCS) adopt a coiled-coil conformation. A glycan (N-linked (GlcNAc...) asparagine) is linked at Asn658. The stretch at 685–752 (IISEINRLQQ…GLQGLREGLS (68 aa)) forms a coiled coil. Asn766 and Asn794 each carry an N-linked (GlcNAc...) asparagine glycan. Disordered regions lie at residues 811–863 (DLTG…VEGA) and 942–961 (RVDSGGYEPEGLENKPVAES). One can recognise a Collagen-like domain in the interval 814 to 864 (GPAGEAGPPGPPGLQGPPGPAGPPGSPGKDGQEGPIGPPGPQGEQGVEGAP). Residues 821–839 (PPGPPGLQGPPGPAGPPGS) show a composition bias toward pro residues. The stretch at 835 to 857 (GPPGSPGKDGQEGPIGPPGPQGE) forms a coiled coil. Positions 866-1013 (APVPQVAFSA…GALLYGDPEL (148 aa)) constitute a C1q domain.

In terms of assembly, homotrimer associated through a moderately stable interaction of the C-terminal globular C1q domains, allowing the nucleation of the triple helix and then a further quaternary assembly to higher-order polymers via intermolecular disulfide bonds. Interacts with EMILIN2. Interacts with EFEMP2; this interaction promotes the incorporation of EFEMP2 into the extracellular matrix. As to expression, distributed in tissues where resilience and elastic recoil are prominent. Highest levels in the adult small intestine, aorta, lung, uterus, and appendix and in the fetal spleen, kidney, lung, and heart; intermediate expression was detected in adult liver, ovary, colon, stomach, lymph node and spleen; adult heart, bladder, prostate, adrenal gland, mammary gland, placenta and kidney showed low expression whereas a series of other adult tissues, including skeletal muscle and different regions of adult brain show no expression. Detected in intramuscular nerve bundles, where it particularly localizes in the epineurium, the most external layer of dense connective tissue enclosing the nerve.

The protein localises to the secreted. The protein resides in the extracellular space. It localises to the extracellular matrix. Functionally, involved in elastic and collagen fibers formation. It is required for EFEMP2 deposition into the extracellular matrix, and collagen network assembly and cross-linking via protein-lysine 6-oxidase/LOX activity. May be responsible for anchoring smooth muscle cells to elastic fibers, and may be involved in the processes that regulate vessel assembly. Has cell adhesive capacity. In Homo sapiens (Human), this protein is EMILIN-1 (EMILIN1).